The chain runs to 801 residues: Vacuolar transporter chaperone complex subunit 4 (801 aa).

The Cytoplasmic segment spans residues 1–692; it reads MPFSKAWRSA…MLKWTEHATR (692 aa). ATP contacts are provided by Lys-215, Arg-286, Arg-288, Lys-312, Lys-325, and Arg-391. A Mn(2+)-binding site is contributed by Glu-441. The active site involves Lys-473. Residues 693-713 traverse the membrane as a helical segment; that stretch reads LGLVGLGVIQFGNSMTLPGDV. At 714–723 the chain is on the vacuolar side; sequence TQLSSFWRAN. Residues 724–744 traverse the membrane as a helical segment; that stretch reads FHIVLGIALVLVALMTLMYAL. Residues 745–768 are Cytoplasmic-facing; it reads MTFKARSRRVYARKKIRFDDSWGP. A helical membrane pass occupies residues 769–789; it reads TVLTVFLAFGICVIAMMHILG. Over 790–801 the chain is Vacuolar; the sequence is RYGPMLTGDDNF.

This sequence belongs to the VTC4 family. In terms of assembly, the VTC core complex is an integral membrane heterooligomer composed of at least the catalytic subunit vtc4 and the accessory subunits vtc1 and vtc2. vtc1 is a small membrane protein without hydrophilic domain. Vtc2 and vtc4 are related and have 2 hydrophilic domains that face the cytosol, an N-terminal SPX domain and the central core domain. The central core in vtc4 is the catalytic domain. Mn(2+) is required as a cofactor.

The protein resides in the acidocalcisome membrane. The enzyme catalyses [phosphate](n) + ATP = [phosphate](n+1) + ADP. Its activity is regulated as follows. Activity of the enzyme is Mn(2+)-dependent and enhanced in the presence of pyrophosphate (PPi). Its function is as follows. Component of a polyphosphate synthase complex that utilizes ATP to synthesize and translocate polyphosphate to acidocalcisomes in epimastigotes, insect-stages of Trypanosoma brucei. Catalytic subunit of the vacuolar transporter chaperone (VTC) complex. The VTC complex acts as a vacuolar polyphosphate polymerase that catalyzes the synthesis of inorganic polyphosphate (polyP) via transfer of phosphate from ATP to a growing polyP chain, releasing ADP. VTC exposes its catalytic domain vtc4 to the cytosol, where the growing polyP chain winds through a tunnel-shaped pocket, integrating cytoplasmic polymer synthesis with polyP membrane translocation. The VTC complex carries 9 vacuolar transmembrane domains, which are likely to constitute the translocation channel into the organelle lumen. PolyP synthesis is tightly coupled to its transport into the vacuole lumen, in order to avoid otherwise toxic intermediates in the cytosol, and it depends on the proton gradient across the membrane, formed by V-ATPase. The VTC complex also plays a role in vacuolar membrane fusion. Essential for infection and parasite survival in the mammalian host. This is Vacuolar transporter chaperone complex subunit 4 from Trypanosoma cruzi (strain CL Brener).